The following is a 372-amino-acid chain: NAD(P)H-quinone oxidoreductase subunit 1, chloroplastic (372 aa).

8 helical membrane passes run 28–48 (IWIC…VLVI), 65–85 (PEYA…KLIL), 97–117 (WLFT…YLVV), 128–148 (IGIG…GLLI), 166–186 (AAQA…IILM), 254–274 (FGLF…FVSV), 312–332 (GIIG…LAVL), and 352–372 (FLLP…ITLL).

The protein belongs to the complex I subunit 1 family. NDH is composed of at least 16 different subunits, 5 of which are encoded in the nucleus.

The protein resides in the plastid. The protein localises to the chloroplast thylakoid membrane. The enzyme catalyses a plastoquinone + NADH + (n+1) H(+)(in) = a plastoquinol + NAD(+) + n H(+)(out). It catalyses the reaction a plastoquinone + NADPH + (n+1) H(+)(in) = a plastoquinol + NADP(+) + n H(+)(out). Functionally, NDH shuttles electrons from NAD(P)H:plastoquinone, via FMN and iron-sulfur (Fe-S) centers, to quinones in the photosynthetic chain and possibly in a chloroplast respiratory chain. The immediate electron acceptor for the enzyme in this species is believed to be plastoquinone. Couples the redox reaction to proton translocation, and thus conserves the redox energy in a proton gradient. This Staurastrum punctulatum (Green alga) protein is NAD(P)H-quinone oxidoreductase subunit 1, chloroplastic.